A 1110-amino-acid polypeptide reads, in one-letter code: Error-prone DNA polymerase (1110 aa).

The segment at 1072–1110 (LGELHEPLNDDRREHPDNPAQRIRHPRDVRILPPSRDFH) is disordered. Basic and acidic residues-rich tracts occupy residues 1073–1088 (GELH…EHPD) and 1097–1110 (PRDV…RDFH).

This sequence belongs to the DNA polymerase type-C family. DnaE2 subfamily.

Its subcellular location is the cytoplasm. It carries out the reaction DNA(n) + a 2'-deoxyribonucleoside 5'-triphosphate = DNA(n+1) + diphosphate. DNA polymerase involved in damage-induced mutagenesis and translesion synthesis (TLS). It is not the major replicative DNA polymerase. The polypeptide is Error-prone DNA polymerase (Rhodopseudomonas palustris (strain BisB5)).